Here is an 82-residue protein sequence, read N- to C-terminus: Sec-independent protein translocase protein TatA (82 aa).

Residues 1 to 21 (MHPPSITQLLIILLIIVLLFG) form a helical membrane-spanning segment. The interval 42–82 (AVKEDEEDNQSEENTKSQIKQSESKNENVSKTHTDSQKQDT) is disordered. Residues 63–82 (SESKNENVSKTHTDSQKQDT) are compositionally biased toward basic and acidic residues.

This sequence belongs to the TatA/E family. The Tat system comprises two distinct complexes: a TatABC complex, containing multiple copies of TatA, TatB and TatC subunits, and a separate TatA complex, containing only TatA subunits. Substrates initially bind to the TatABC complex, which probably triggers association of the separate TatA complex to form the active translocon.

Its subcellular location is the cell inner membrane. Functionally, part of the twin-arginine translocation (Tat) system that transports large folded proteins containing a characteristic twin-arginine motif in their signal peptide across membranes. TatA could form the protein-conducting channel of the Tat system. The chain is Sec-independent protein translocase protein TatA from Helicobacter hepaticus (strain ATCC 51449 / 3B1).